Reading from the N-terminus, the 136-residue chain is Fatty acid-binding protein homolog 5 (136 aa).

Residues Arg-111 and 131–133 (RAY) each bind a fatty acid.

This sequence belongs to the calycin superfamily. Fatty-acid binding protein (FABP) family.

The protein is Fatty acid-binding protein homolog 5 (lbp-5) of Caenorhabditis elegans.